A 138-amino-acid polypeptide reads, in one-letter code: Cysteine desulfuration protein SufE (138 aa).

Cys-51 functions as the Cysteine persulfide intermediate in the catalytic mechanism.

This sequence belongs to the SufE family. In terms of assembly, homodimer. Interacts with SufS.

The protein resides in the cytoplasm. The protein operates within cofactor biosynthesis; iron-sulfur cluster biosynthesis. Participates in cysteine desulfuration mediated by SufS. Cysteine desulfuration mobilizes sulfur from L-cysteine to yield L-alanine and constitutes an essential step in sulfur metabolism for biosynthesis of a variety of sulfur-containing biomolecules. Functions as a sulfur acceptor for SufS, by mediating the direct transfer of the sulfur atom from the S-sulfanylcysteine of SufS, an intermediate product of cysteine desulfuration process. The chain is Cysteine desulfuration protein SufE from Pectobacterium atrosepticum (strain SCRI 1043 / ATCC BAA-672) (Erwinia carotovora subsp. atroseptica).